The following is a 250-amino-acid chain: Probable transcriptional regulatory protein SAV_6832 (250 aa).

It belongs to the TACO1 family.

It is found in the cytoplasm. The polypeptide is Probable transcriptional regulatory protein SAV_6832 (Streptomyces avermitilis (strain ATCC 31267 / DSM 46492 / JCM 5070 / NBRC 14893 / NCIMB 12804 / NRRL 8165 / MA-4680)).